Consider the following 444-residue polypeptide: Probable glycine dehydrogenase (decarboxylating) subunit 1 (444 aa).

Belongs to the GcvP family. N-terminal subunit subfamily. The glycine cleavage system is composed of four proteins: P, T, L and H. In this organism, the P 'protein' is a heterodimer of two subunits.

It carries out the reaction N(6)-[(R)-lipoyl]-L-lysyl-[glycine-cleavage complex H protein] + glycine + H(+) = N(6)-[(R)-S(8)-aminomethyldihydrolipoyl]-L-lysyl-[glycine-cleavage complex H protein] + CO2. Functionally, the glycine cleavage system catalyzes the degradation of glycine. The P protein binds the alpha-amino group of glycine through its pyridoxal phosphate cofactor; CO(2) is released and the remaining methylamine moiety is then transferred to the lipoamide cofactor of the H protein. The polypeptide is Probable glycine dehydrogenase (decarboxylating) subunit 1 (Chlorobaculum parvum (strain DSM 263 / NCIMB 8327) (Chlorobium vibrioforme subsp. thiosulfatophilum)).